A 352-amino-acid chain; its full sequence is CMP-sialic acid transporter 4 (352 aa).

The Cytoplasmic portion of the chain corresponds to 1–51 (MEYRKIKDEDDHDVASDIESVKGKSHTVASSNIAMATLGVGSSERINWKRK). The helical transmembrane segment at 52–72 (GVVTCALTILTSSQAILIVWS) threads the bilayer. The Lumenal portion of the chain corresponds to 73–81 (KRAGKYEYS). Residues 82-102 (VTTANFLVGTLKCALSLLALT) traverse the membrane as a helical segment. Residues 103 to 124 (RIWKNEGVTDDNRLSTTFDEVK) are Cytoplasmic-facing. Residues 125 to 145 (VFPIPAALYLFKNLLQYYIFA) form a helical membrane-spanning segment. Topologically, residues 146–174 (YVDAPGYQILKNLNIISTGVLYRIILKRK) are lumenal. The chain crosses the membrane as a helical span at residues 175-195 (LSEIQWAGFILLCCGCTTAQL). Topologically, residues 196–210 (NSNSDRVLQTSLPGW) are cytoplasmic. Residues 211 to 231 (TMAIVMALLSGFAGVYTEAII) form a helical membrane-spanning segment. Residues 232–238 (KKRPSRN) lie on the Lumenal side of the membrane. The helical transmembrane segment at 239–259 (INVQNFWLYVFGMAFNAVAIV) threads the bilayer. The Cytoplasmic segment spans residues 260–276 (IQDFDAVANKGFFHGYS). The chain crosses the membrane as a helical span at residues 277–297 (FITLLMILNHALSGIAVSMVM). The Lumenal portion of the chain corresponds to 298-313 (KYADNIVKVYSTSVAM). A helical transmembrane segment spans residues 314-334 (LLTAVVSVFLFNFHLSLAFFL). The Cytoplasmic segment spans residues 335 to 352 (GSTVVSVSVYLHSAGKLR).

Belongs to the nucleotide-sugar transporter family. CMP-Sialate:CMP antiporter (TC 2.A.7.12) subfamily.

It localises to the golgi apparatus membrane. In terms of biological role, sugar transporter involved in the transport of CMP-sialic acid from the cytoplasm into the Golgi. Essential protein. The polypeptide is CMP-sialic acid transporter 4 (Arabidopsis thaliana (Mouse-ear cress)).